A 198-amino-acid polypeptide reads, in one-letter code: Virion infectivity factor (198 aa).

The RNA-binding stretch occupies residues 76–115 (GERPWHLGHGIGLEWRQGKYSTQIDPETADQLIHTRYFTC). At threonine 97 the chain carries Phosphothreonine; by host MAP4K1. Positions 109–140 (HTRYFTCFAAGAVRQAILGERILTFCHFQSGH) match the HCCH motif motif. The residue at position 145 (threonine 145) is a Phosphothreonine; by host. The BC-box-like motif motif lies at 145–154 (TLQFLAFRKV). The interval 152-170 (RKVVESQDKQPKGPRRPLP) is multimerization. A disordered region spans residues 159 to 198 (DKQPKGPRRPLPSVTKLTEDRWNKHRTTTGRRENHTLSGC). Position 171 is a phosphoserine; by host MAP4K1 (serine 171). Positions 177–178 (ED) are membrane association. A compositionally biased stretch (basic and acidic residues) spans 188–198 (GRRENHTLSGC).

It belongs to the primate lentivirus group Vif protein family. As to quaternary structure, homomultimer; in vitro and presumably in vivo. Interacts with viral Pr55Gag precursor, host APOBEC3G, UBCE7IP1 isoform 3/ZIN, ABCE1 and possibly with SAT. Forms an E3 ligase complex by interacting with host CUL5 and elongin BC complex (ELOB and ELOC). In terms of processing, highly phosphorylated on serine and threonine residues. Thr-97 and Ser-171 are phosphorylated by the mitogen activated kinase MAP4K1. Post-translationally, polyubiquitinated and degraded by the proteasome in the presence of APOBEC3G.

It is found in the host cytoplasm. It localises to the host cell membrane. Its subcellular location is the virion. Its function is as follows. Counteracts the innate antiviral activity of APOBEC3G. Forms a complex with host APOBEC3G thus preventing the entry of this lethally hypermutating enzyme into progeny virions. Functions as an adapter molecule, recruiting APOBEC3G to the ubiquitin-proteasome machinery. Targets APOBEC3G for degradation through the assembly with elongin BC complex, CUL5 and RBX1. Binds viral RNA and affects the stability of viral nucleoprotein core. May play a role in viral morphology. Interacts with host ABCE1, which seems to be involved in lentiviruses capsid formation and displays RNase L inhibitor activity. This interaction may play a role in protecting viral RNA from damage during viral assembly. May interact with host SAT, which is a regulator of polyamine cell level. This interaction may be relevant since polyamines affect viral RNA properties. In Pan troglodytes (Chimpanzee), this protein is Virion infectivity factor.